The primary structure comprises 410 residues: Tryptophan synthase beta chain (410 aa).

Lys104 bears the N6-(pyridoxal phosphate)lysine mark.

Belongs to the TrpB family. Tetramer of two alpha and two beta chains. Pyridoxal 5'-phosphate serves as cofactor.

The catalysed reaction is (1S,2R)-1-C-(indol-3-yl)glycerol 3-phosphate + L-serine = D-glyceraldehyde 3-phosphate + L-tryptophan + H2O. Its pathway is amino-acid biosynthesis; L-tryptophan biosynthesis; L-tryptophan from chorismate: step 5/5. Functionally, the beta subunit is responsible for the synthesis of L-tryptophan from indole and L-serine. In Thermosynechococcus vestitus (strain NIES-2133 / IAM M-273 / BP-1), this protein is Tryptophan synthase beta chain.